A 360-amino-acid polypeptide reads, in one-letter code: DAZ-associated protein 1 (360 aa).

2 RRM domains span residues 10-97 and 114-191; these read GKLF…RSRP and NKIF…RAEP. Disordered regions lie at residues 73–116 and 184–345; these read HTLD…SNKI and VEVK…DFPF. Basic and acidic residues-rich tracts occupy residues 91–112 and 184–195; these read QPER…ENSR and VEVKRAEPRDSK. Over residues 203 to 231 the composition is skewed to polar residues; that stretch reads GSNQWGSRAMQSTANGWTGQPPQTWQGYS. Over residues 242–253 the composition is skewed to gly residues; that stretch reads TIGGYGQPAGRG. The segment covering 271-301 has biased composition (pro residues); the sequence is GPFPPPQGFPPGYATPPPFGYGYGPPPPPPD. Polar residues predominate over residues 328 to 345; sequence QSAQDLSKPPSGQQDFPF.

Component of a mRNP complex, at least composed of DAZAP1, IGF2BP3-A, STAU and VgRBP60. Binds to the 3'-UTR of Vg1 mRNA. Interacts with profilin, a protein involved in actin assembly. Interacts with VgRBP71. As to expression, expressed in oocytes.

Its subcellular location is the cytoplasm. RNA-binding protein, which is required during gametogenesis. May be involved in the actin-dependent anchoring of Vg1 mRNA in the vegetal cortex of the oocyte. This is DAZ-associated protein 1 (dazap1) from Xenopus laevis (African clawed frog).